Reading from the N-terminus, the 222-residue chain is N-(5'-phosphoribosyl)anthranilate isomerase (222 aa).

This sequence belongs to the TrpF family.

It catalyses the reaction N-(5-phospho-beta-D-ribosyl)anthranilate = 1-(2-carboxyphenylamino)-1-deoxy-D-ribulose 5-phosphate. The protein operates within amino-acid biosynthesis; L-tryptophan biosynthesis; L-tryptophan from chorismate: step 3/5. The chain is N-(5'-phosphoribosyl)anthranilate isomerase from Rhizobium johnstonii (strain DSM 114642 / LMG 32736 / 3841) (Rhizobium leguminosarum bv. viciae).